A 305-amino-acid polypeptide reads, in one-letter code: Protoheme IX farnesyltransferase 1 (305 aa).

Helical transmembrane passes span 30–50 (IGIV…AFQF), 59–79 (LDVI…SGAM), 108–128 (FVLT…FAAS), 129–149 (FAAG…YSMW), 154–176 (HVSN…FAAV), 180–202 (LGPG…FYAL), 232–252 (LFWI…GIGF), 253–273 (LTLA…GFTA), and 284–304 (FIYS…FAVF).

Belongs to the UbiA prenyltransferase family. Protoheme IX farnesyltransferase subfamily. In terms of assembly, interacts with CtaA.

The protein resides in the cell membrane. It catalyses the reaction heme b + (2E,6E)-farnesyl diphosphate + H2O = Fe(II)-heme o + diphosphate. The protein operates within porphyrin-containing compound metabolism; heme O biosynthesis; heme O from protoheme: step 1/1. In terms of biological role, converts heme B (protoheme IX) to heme O by substitution of the vinyl group on carbon 2 of heme B porphyrin ring with a hydroxyethyl farnesyl side group. In Lysinibacillus sphaericus (strain C3-41), this protein is Protoheme IX farnesyltransferase 1.